A 925-amino-acid chain; its full sequence is Protein translocase subunit SecA (925 aa).

Residues Q87, 105–109 (GEGKT), and D531 contribute to the ATP site. The segment at 867–909 (AAGADMRFQHSQPESVLHKPEAGEGEEAQPFRRETPKVGRNDP) is disordered. Basic and acidic residues predominate over residues 895 to 906 (QPFRRETPKVGR). The Zn(2+) site is built by C910, C912, C921, and H922.

Belongs to the SecA family. As to quaternary structure, monomer and homodimer. Part of the essential Sec protein translocation apparatus which comprises SecA, SecYEG and auxiliary proteins SecDF-YajC and YidC. It depends on Zn(2+) as a cofactor.

The protein resides in the cell inner membrane. It localises to the cytoplasm. The catalysed reaction is ATP + H2O + cellular proteinSide 1 = ADP + phosphate + cellular proteinSide 2.. Its function is as follows. Part of the Sec protein translocase complex. Interacts with the SecYEG preprotein conducting channel. Has a central role in coupling the hydrolysis of ATP to the transfer of proteins into and across the cell membrane, serving both as a receptor for the preprotein-SecB complex and as an ATP-driven molecular motor driving the stepwise translocation of polypeptide chains across the membrane. The polypeptide is Protein translocase subunit SecA (Thioalkalivibrio sulfidiphilus (strain HL-EbGR7)).